We begin with the raw amino-acid sequence, 337 residues long: Angiopoietin-related protein 7 (337 aa).

The first 21 residues, 1–21 (MLRETWLCVILVAFVSHPVWL), serve as a signal peptide directing secretion. Residues 30 to 110 (QLKAAGCCEE…DIMQLQAAQT (81 aa)) adopt a coiled-coil conformation. Asn49 is a glycosylation site (N-linked (GlcNAc...) asparagine). The Fibrinogen C-terminal domain maps to 113 to 334 (QTSADAIYDC…RVEMKIRPEA (222 aa)). Cys122 and Cys153 are disulfide-bonded. Asn244 and Asn258 each carry an N-linked (GlcNAc...) asparagine glycan. An intrachain disulfide couples Cys276 to Cys289. An N-linked (GlcNAc...) asparagine glycan is attached at Asn320.

As to quaternary structure, homotetramer; disulfide-linked.

The protein resides in the secreted. Has a role in the formation and organization of the extracellular matrix. In the eye, it functions as a mediator of dexamethasone-induced matrix deposition in the trabecular meshwork, the tissue responsible for the outflow of the ocular aqueous humor and for the maintenance of intraocular pressure. Is a negative regulator of angiogenesis in the cornea, and plays a major role in maintaining corneal avascularity and transparency. The polypeptide is Angiopoietin-related protein 7 (Angptl7) (Mus musculus (Mouse)).